The following is a 143-amino-acid chain: Hemoglobin subunit alpha (143 aa).

Positions 3–143 (KLSGEDKANV…TMRLCISKYR (141 aa)) constitute a Globin domain. Position 60 (histidine 60) interacts with O2. Position 89 (histidine 89) interacts with heme b.

The protein belongs to the globin family. As to quaternary structure, heterotetramer of two alpha chains and two beta chains. In terms of tissue distribution, red blood cells.

In terms of biological role, involved in oxygen transport from the lung to the various peripheral tissues. This Ambystoma mexicanum (Axolotl) protein is Hemoglobin subunit alpha (HBA).